Consider the following 721-residue polypeptide: S-adenosyl-L-methionine-dependent tRNA 4-demethylwyosine synthase TYW1 (721 aa).

The region spanning 71-229 (VKIFYGSQTG…DFTAWKTKFI (159 aa)) is the Flavodoxin-like domain. Residues 77–81 (SQTGT) and 168–200 (VFGL…QRVL) contribute to the FMN site. 2 disordered regions span residues 242-291 (ACGG…ELGT) and 305-339 (DLGN…TEDG). The span at 250 to 274 (GKCESAQHGPGEARPHPQGELHPGD) shows a compositional bias: basic and acidic residues. Positions 275 to 290 (AEEEEPCESSSEDELG) are enriched in acidic residues. A compositionally biased stretch (basic and acidic residues) spans 313 to 325 (VKREKREKSHQDG). One can recognise a Radical SAM core domain in the interval 389–635 (YGIESHRCME…LLPDYEVACE (247 aa)). 3 residues coordinate [4Fe-4S] cluster: C405, C409, and C412.

It belongs to the TYW1 family. [4Fe-4S] cluster serves as cofactor.

The catalysed reaction is N(1)-methylguanosine(37) in tRNA(Phe) + pyruvate + S-adenosyl-L-methionine = 4-demethylwyosine(37) in tRNA(Phe) + 5'-deoxyadenosine + L-methionine + CO2 + H2O. It participates in tRNA modification; wybutosine-tRNA(Phe) biosynthesis. Functionally, probable component of the wybutosine biosynthesis pathway. Wybutosine is a hyper modified guanosine with a tricyclic base found at the 3'-position adjacent to the anticodon of eukaryotic phenylalanine tRNA. Catalyzes the condensation of N-methylguanine with 2 carbon atoms from pyruvate to form the tricyclic 4-demethylwyosine, an intermediate in wybutosine biosynthesis. In Mus musculus (Mouse), this protein is S-adenosyl-L-methionine-dependent tRNA 4-demethylwyosine synthase TYW1 (Tyw1).